A 260-amino-acid polypeptide reads, in one-letter code: Adenosylcobinamide-GDP ribazoletransferase (260 aa).

Transmembrane regions (helical) follow at residues 31-51, 55-75, 111-131, 140-160, 177-197, 202-222, and 234-254; these read IIFF…LVNI, IFSS…VRGI, VIGV…FAFV, FLIF…LMYY, ISSW…VYFT, FIFL…LKKF, and HLGA…LLGE.

Belongs to the CobS family. Mg(2+) serves as cofactor.

It is found in the cell inner membrane. The catalysed reaction is alpha-ribazole + adenosylcob(III)inamide-GDP = adenosylcob(III)alamin + GMP + H(+). It carries out the reaction alpha-ribazole 5'-phosphate + adenosylcob(III)inamide-GDP = adenosylcob(III)alamin 5'-phosphate + GMP + H(+). It participates in cofactor biosynthesis; adenosylcobalamin biosynthesis; adenosylcobalamin from cob(II)yrinate a,c-diamide: step 7/7. Joins adenosylcobinamide-GDP and alpha-ribazole to generate adenosylcobalamin (Ado-cobalamin). Also synthesizes adenosylcobalamin 5'-phosphate from adenosylcobinamide-GDP and alpha-ribazole 5'-phosphate. This Thermodesulfovibrio yellowstonii (strain ATCC 51303 / DSM 11347 / YP87) protein is Adenosylcobinamide-GDP ribazoletransferase.